Reading from the N-terminus, the 77-residue chain is Translation initiation factor IF-1, chloroplastic (77 aa).

The S1-like domain maps to 1 to 71 (MKEQKWIHEG…TRGRIIYRLR (71 aa)).

It belongs to the IF-1 family. As to quaternary structure, component of the 30S ribosomal translation pre-initiation complex which assembles on the 30S ribosome in the order IF-2 and IF-3, IF-1 and N-formylmethionyl-tRNA(fMet); mRNA recruitment can occur at any time during PIC assembly.

It is found in the plastid. The protein localises to the chloroplast. One of the essential components for the initiation of protein synthesis. Stabilizes the binding of IF-2 and IF-3 on the 30S subunit to which N-formylmethionyl-tRNA(fMet) subsequently binds. Helps modulate mRNA selection, yielding the 30S pre-initiation complex (PIC). Upon addition of the 50S ribosomal subunit IF-1, IF-2 and IF-3 are released leaving the mature 70S translation initiation complex. The protein is Translation initiation factor IF-1, chloroplastic of Nandina domestica (Heavenly bamboo).